A 548-amino-acid chain; its full sequence is Copine-2 (548 aa).

2 consecutive C2 domains span residues 6–131 (DGGA…TRPL) and 138–263 (PAGK…PLEI). Residues Asp39, Asp45, Asp97, Asp99, Ser102, Asp109, Asp170, Asp176, Asp232, Asp234, and Asp240 each contribute to the Ca(2+) site. Residues 247 to 304 (TSVLQMSEARDGVPLEIECINPKKQRKKKSYKNSGIIILRSCKIHRNYSFLDYILGGC) form a linker region region. The VWFA domain occupies 305 to 507 (QLMFTVGIDF…AARDIVQFVP (203 aa)).

It belongs to the copine family. Ca(2+) is required as a cofactor.

It is found in the cytoplasm. Its subcellular location is the nucleus. The protein localises to the cell membrane. Its function is as follows. Calcium-dependent phospholipid-binding protein that plays a role in calcium-mediated intracellular processes. Exhibits calcium-dependent cell membrane binding properties. This Mus musculus (Mouse) protein is Copine-2.